The following is a 622-amino-acid chain: Low affinity potassium transport system protein Kup (622 aa).

Transmembrane regions (helical) follow at residues 9–29, 46–66, 101–121, 137–157, 165–185, 213–233, 247–267, 276–296, 337–357, 363–383, 395–415, and 416–436; these read LSAV…TSPL, PDVV…VVSV, ILVV…VITP, PALD…LFVI, VGKL…LLGL, VSFF…ALYA, WFTV…ALLL, PFFL…ATLA, IYIP…IIGF, LAAA…ILFC, FLVV…FSAN, and VLKL…MFII.

Belongs to the HAK/KUP transporter (TC 2.A.72) family.

The protein localises to the cell inner membrane. The catalysed reaction is K(+)(in) + H(+)(in) = K(+)(out) + H(+)(out). Responsible for the low-affinity transport of potassium into the cell. Likely operates as a K(+):H(+) symporter. The chain is Low affinity potassium transport system protein Kup from Yersinia pestis (strain Pestoides F).